Consider the following 807-residue polypeptide: Protein WEAK CHLOROPLAST MOVEMENT UNDER BLUE LIGHT 1 (807 aa).

The segment at 1-162 is disordered; that stretch reads MEDLKTVEAS…GTPKNVDSHR (162 aa). Residues 31 to 40 are compositionally biased toward polar residues; sequence RESNIQSATK. Low complexity predominate over residues 46–73; sequence QSQTDTEETQQSQTDTEETQQSQTDDTT. The span at 138-157 shows a compositional bias: polar residues; it reads RTVSSPRFSGSPVSTGTPKN. Residue serine 148 is modified to Phosphoserine. 4 coiled-coil regions span residues 191–429, 457–489, 516–621, and 664–724; these read RMQA…ELVA, DLHAAVASAKKELEEVNVNIEKAAAEVSCLKLA, IAVA…ALEE, and AAVS…WRAE. Disordered regions lie at residues 532–565 and 722–789; these read IASVQSKEKDAREKMVELPKQLQQAAEEADEAKS and RAEH…KKKK. Composition is skewed to basic and acidic residues over residues 537–548, 722–732, and 739–749; these read SKEKDAREKMVE, RAEHEQKRKAG, and KNLKESFEGGK. A compositionally biased stretch (polar residues) spans 761-781; that stretch reads SSPSESYGTEENSETNLSPQT.

This sequence belongs to the WEB family. In terms of assembly, interacts with PMI2. In terms of tissue distribution, ubiquitous but preferentially in chloroplast-containing tissues.

The protein localises to the cytoplasm. Required for the chloroplast avoidance response under high intensity blue light. This avoidance response consists in the relocation of chloroplasts on the anticlinal side of exposed cells. Acts in association with PMI2 to maintain the velocity of chloroplast photorelocation movement via cp-actin filaments regulation. The sequence is that of Protein WEAK CHLOROPLAST MOVEMENT UNDER BLUE LIGHT 1 (WEB1) from Arabidopsis thaliana (Mouse-ear cress).